Reading from the N-terminus, the 247-residue chain is Sugar fermentation stimulation protein homolog (247 aa).

This sequence belongs to the SfsA family.

The chain is Sugar fermentation stimulation protein homolog from Aeromonas salmonicida (strain A449).